The primary structure comprises 268 residues: F-actin-capping protein subunit beta (268 aa).

It belongs to the F-actin-capping protein beta subunit family. In terms of assembly, component of the F-actin capping complex, composed of a heterodimer of an alpha and a beta subunit.

The protein localises to the cytoplasm. Its subcellular location is the cytoskeleton. It localises to the actin patch. The protein resides in the nucleus. F-actin-capping proteins bind in a Ca(2+)-independent manner to the fast growing ends of actin filaments (barbed end) thereby blocking the exchange of subunits at these ends. Unlike other capping proteins (such as gelsolin and severin), these proteins do not sever actin filaments. Competes with formin cdc12 for attachment to the actin filaments barbed ends. Slowly replaces cdc12 on the barbed ends in preparation for filament disassembly during contractile ring constriction. The sequence is that of F-actin-capping protein subunit beta (acp2) from Schizosaccharomyces pombe (strain 972 / ATCC 24843) (Fission yeast).